The primary structure comprises 95 residues: Small ribosomal subunit protein uS19 (95 aa).

A disordered region spans residues 76–95 (PTRTFRGHGGKKADKRGKLK). A compositionally biased stretch (basic residues) spans 80 to 95 (FRGHGGKKADKRGKLK).

Belongs to the universal ribosomal protein uS19 family.

In terms of biological role, protein S19 forms a complex with S13 that binds strongly to the 16S ribosomal RNA. The sequence is that of Small ribosomal subunit protein uS19 from Herpetosiphon aurantiacus (strain ATCC 23779 / DSM 785 / 114-95).